Reading from the N-terminus, the 465-residue chain is GTPase Der (465 aa).

2 consecutive EngA-type G domains span residues 3 to 167 and 179 to 352; these read PLVA…PERS and IHIA…VSAL. GTP-binding positions include 9–16, 57–61, 119–122, 185–192, 232–236, and 297–300; these read GRPNVGKS, DTGGM, NKID, DTAGL, and NKWD. The region spanning 353 to 437 is the KH-like domain; that stretch reads RQFSTSEVNK…PVRFLFREGD (85 aa).

Belongs to the TRAFAC class TrmE-Era-EngA-EngB-Septin-like GTPase superfamily. EngA (Der) GTPase family. In terms of assembly, associates with the 50S ribosomal subunit.

In terms of biological role, GTPase that plays an essential role in the late steps of ribosome biogenesis. The chain is GTPase Der from Xylella fastidiosa (strain M12).